The primary structure comprises 510 residues: ATP synthase subunit alpha (510 aa).

170 to 177 (GDRQTGKT) lines the ATP pocket.

It belongs to the ATPase alpha/beta chains family. As to quaternary structure, F-type ATPases have 2 components, CF(1) - the catalytic core - and CF(0) - the membrane proton channel. CF(1) has five subunits: alpha(3), beta(3), gamma(1), delta(1), epsilon(1). CF(0) has three main subunits: a(1), b(2) and c(9-12). The alpha and beta chains form an alternating ring which encloses part of the gamma chain. CF(1) is attached to CF(0) by a central stalk formed by the gamma and epsilon chains, while a peripheral stalk is formed by the delta and b chains.

It is found in the cell inner membrane. The catalysed reaction is ATP + H2O + 4 H(+)(in) = ADP + phosphate + 5 H(+)(out). Functionally, produces ATP from ADP in the presence of a proton gradient across the membrane. The alpha chain is a regulatory subunit. The sequence is that of ATP synthase subunit alpha from Maricaulis maris (strain MCS10) (Caulobacter maris).